The chain runs to 282 residues: Bifunctional protein FolD (282 aa).

NADP(+) is bound by residues 162–164, Ser-187, and Val-228; that span reads GRS.

This sequence belongs to the tetrahydrofolate dehydrogenase/cyclohydrolase family. Homodimer.

The enzyme catalyses (6R)-5,10-methylene-5,6,7,8-tetrahydrofolate + NADP(+) = (6R)-5,10-methenyltetrahydrofolate + NADPH. It catalyses the reaction (6R)-5,10-methenyltetrahydrofolate + H2O = (6R)-10-formyltetrahydrofolate + H(+). The protein operates within one-carbon metabolism; tetrahydrofolate interconversion. Functionally, catalyzes the oxidation of 5,10-methylenetetrahydrofolate to 5,10-methenyltetrahydrofolate and then the hydrolysis of 5,10-methenyltetrahydrofolate to 10-formyltetrahydrofolate. This chain is Bifunctional protein FolD, found in Thermus thermophilus (strain ATCC BAA-163 / DSM 7039 / HB27).